The sequence spans 331 residues: Phosphate acyltransferase (331 aa).

This sequence belongs to the PlsX family. As to quaternary structure, homodimer. Probably interacts with PlsY.

It localises to the cytoplasm. The enzyme catalyses a fatty acyl-[ACP] + phosphate = an acyl phosphate + holo-[ACP]. The protein operates within lipid metabolism; phospholipid metabolism. Functionally, catalyzes the reversible formation of acyl-phosphate (acyl-PO(4)) from acyl-[acyl-carrier-protein] (acyl-ACP). This enzyme utilizes acyl-ACP as fatty acyl donor, but not acyl-CoA. The chain is Phosphate acyltransferase from Clostridium acetobutylicum (strain ATCC 824 / DSM 792 / JCM 1419 / IAM 19013 / LMG 5710 / NBRC 13948 / NRRL B-527 / VKM B-1787 / 2291 / W).